The following is a 227-amino-acid chain: Ribonuclease 3 (227 aa).

Positions L4–G126 constitute an RNase III domain. A Mg(2+)-binding site is contributed by E39. D43 is an active-site residue. 2 residues coordinate Mg(2+): D112 and E115. E115 is a catalytic residue. Residues D153 to I226 form the DRBM domain.

The protein belongs to the ribonuclease III family. In terms of assembly, homodimer. The cofactor is Mg(2+).

Its subcellular location is the cytoplasm. The enzyme catalyses Endonucleolytic cleavage to 5'-phosphomonoester.. Digests double-stranded RNA. Involved in the processing of primary rRNA transcript to yield the immediate precursors to the large and small rRNAs (23S and 16S). Processes some mRNAs, and tRNAs when they are encoded in the rRNA operon. Processes pre-crRNA and tracrRNA of type II CRISPR loci if present in the organism. This is Ribonuclease 3 from Haemophilus influenzae (strain PittGG).